We begin with the raw amino-acid sequence, 318 residues long: Biotin synthase (318 aa).

The Radical SAM core domain occupies Leu44–Arg273. [4Fe-4S] cluster is bound by residues Cys62, Cys66, and Cys69. Residues Ser106, Cys138, Cys198, and Arg268 each contribute to the [2Fe-2S] cluster site.

This sequence belongs to the radical SAM superfamily. Biotin synthase family. As to quaternary structure, homodimer. Requires [4Fe-4S] cluster as cofactor. It depends on [2Fe-2S] cluster as a cofactor.

It catalyses the reaction (4R,5S)-dethiobiotin + (sulfur carrier)-SH + 2 reduced [2Fe-2S]-[ferredoxin] + 2 S-adenosyl-L-methionine = (sulfur carrier)-H + biotin + 2 5'-deoxyadenosine + 2 L-methionine + 2 oxidized [2Fe-2S]-[ferredoxin]. It participates in cofactor biosynthesis; biotin biosynthesis; biotin from 7,8-diaminononanoate: step 2/2. Catalyzes the conversion of dethiobiotin (DTB) to biotin by the insertion of a sulfur atom into dethiobiotin via a radical-based mechanism. This chain is Biotin synthase, found in Clostridium botulinum (strain Alaska E43 / Type E3).